Consider the following 476-residue polypeptide: Lactate utilization protein B (476 aa).

2 4Fe-4S ferredoxin-type domains span residues 304–334 (GTEFQPVLQCIRCAACVNVCPVYRHIGGHSY) and 353–382 (YDDYKELPYASSLCAACTEVCPVKIPLHEL). Residues cysteine 313, cysteine 316, cysteine 319, cysteine 323, cysteine 366, cysteine 369, and cysteine 373 each contribute to the [4Fe-4S] cluster site.

The protein belongs to the LutB/YkgF family.

Its function is as follows. Is involved in L-lactate degradation and allows cells to grow with lactate as the sole carbon source. Has probably a role as an electron transporter during oxidation of L-lactate. The sequence is that of Lactate utilization protein B from Geobacillus thermodenitrificans (strain NG80-2).